The chain runs to 640 residues: 1-deoxy-D-xylulose-5-phosphate synthase (640 aa).

Residues H72 and 113-115 (GHA) contribute to the thiamine diphosphate site. D144 is a Mg(2+) binding site. Thiamine diphosphate is bound by residues 145-146 (GA), N174, Y287, and E370. N174 provides a ligand contact to Mg(2+).

Belongs to the transketolase family. DXPS subfamily. Homodimer. Requires Mg(2+) as cofactor. The cofactor is thiamine diphosphate.

The catalysed reaction is D-glyceraldehyde 3-phosphate + pyruvate + H(+) = 1-deoxy-D-xylulose 5-phosphate + CO2. It participates in metabolic intermediate biosynthesis; 1-deoxy-D-xylulose 5-phosphate biosynthesis; 1-deoxy-D-xylulose 5-phosphate from D-glyceraldehyde 3-phosphate and pyruvate: step 1/1. Functionally, catalyzes the acyloin condensation reaction between C atoms 2 and 3 of pyruvate and glyceraldehyde 3-phosphate to yield 1-deoxy-D-xylulose-5-phosphate (DXP). The sequence is that of 1-deoxy-D-xylulose-5-phosphate synthase from Synechocystis sp. (strain ATCC 27184 / PCC 6803 / Kazusa).